Reading from the N-terminus, the 185-residue chain is Putative manganese efflux pump MntP (185 aa).

The next 6 helical transmembrane spans lie at 4–24 (LTSS…ALAI), 36–56 (ALVI…AGWI), 65–85 (ISSY…IKMI), 105–125 (VILL…SFGV), 130–150 (VLMP…AGVF), and 165–185 (IFGG…ILPL).

This sequence belongs to the MntP (TC 9.B.29) family.

It localises to the cell membrane. Functionally, probably functions as a manganese efflux pump. This is Putative manganese efflux pump MntP from Methanoregula boonei (strain DSM 21154 / JCM 14090 / 6A8).